The primary structure comprises 256 residues: tRNA pseudouridine synthase A (256 aa).

Asp52 acts as the Nucleophile in catalysis. Tyr111 serves as a coordination point for substrate.

Belongs to the tRNA pseudouridine synthase TruA family. In terms of assembly, homodimer.

The catalysed reaction is uridine(38/39/40) in tRNA = pseudouridine(38/39/40) in tRNA. Its function is as follows. Formation of pseudouridine at positions 38, 39 and 40 in the anticodon stem and loop of transfer RNAs. The protein is tRNA pseudouridine synthase A of Paramagnetospirillum magneticum (strain ATCC 700264 / AMB-1) (Magnetospirillum magneticum).